The following is a 355-amino-acid chain: Type II restriction enzyme CfrBI (355 aa).

It catalyses the reaction Endonucleolytic cleavage of DNA to give specific double-stranded fragments with terminal 5'-phosphates.. Functionally, a P subtype restriction enzyme that recognizes the double-stranded sequence 5'-CCWWGG-3' and cleaves after C-1. The sequence is that of Type II restriction enzyme CfrBI from Citrobacter freundii.